The following is a 624-amino-acid chain: Translocator protein BipB (624 aa).

Positions 54–99 (LASEQCDAQPVTDDARLDRLDDKPALRAPRSDAAHAADGNARGNGG) are disordered. A compositionally biased stretch (basic and acidic residues) spans 66–88 (DDARLDRLDDKPALRAPRSDAAH). Residues 313 to 343 (EMQAKREAELQKKSDEYQEQVKKAEEMQKTM) are a coiled coil. Transmembrane regions (helical) follow at residues 359–379 (FAAAAFTGGASLALAAVGLAL), 405–425 (AILKPLMEVISSLITKALVAC), and 434–454 (LAGAILGAVVTGVALVAAAFV).

The protein belongs to the SctE/SipB/YopB family.

It localises to the secreted. The protein resides in the host membrane. Plays a role in the bacterium-induced formation of multinucleated giant cell (MNGC), which is formed after host cell fusion, as well as in the intercellular spreading of bacteria and in the induction of apoptosis in macrophages. May act in concert with other effector proteins to induce fusion of host cell membranes. This is Translocator protein BipB (bipB) from Burkholderia thailandensis (strain ATCC 700388 / DSM 13276 / CCUG 48851 / CIP 106301 / E264).